Consider the following 51-residue polypeptide: FVNQHLCGSHLVEALYLVCGERGFFYTPKAGIVEQCCTSICSLYQLENYCN.

3 disulfide bridges follow: C7-C37, C19-C50, and C36-C41.

Belongs to the insulin family. Heterodimer of a B chain and an A chain linked by two disulfide bonds.

Its subcellular location is the secreted. Functionally, insulin decreases blood glucose concentration. It increases cell permeability to monosaccharides, amino acids and fatty acids. It accelerates glycolysis, the pentose phosphate cycle, and glycogen synthesis in liver. The polypeptide is Insulin (INS) (Balaenoptera physalus (Fin whale)).